A 380-amino-acid polypeptide reads, in one-letter code: Kappa-type opioid receptor (380 aa).

At 1–57 (MEPPVQIFRGEPGPTCSPSTCLPPNGSGWFPGWAEPDGNGSAGSEDVLLEPAHISPV) the chain is on the extracellular side. N-linked (GlcNAc...) asparagine glycans are attached at residues Asn25 and Asn39. Residues 58-85 (ILVIITAVYSVVFVVGLVGNSLVMFVII) form a helical membrane-spanning segment. The Cytoplasmic segment spans residues 86–95 (RYTKMKTATN). A helical transmembrane segment spans residues 96–119 (IYIFNLALADALVTTTMPFQSTVY). Over 120–132 (LMNSWPFGDVLCK) the chain is Extracellular. A disulfide bridge links Cys131 with Cys210. Residues 133-154 (VVISIDYYNMFTSIFTLTMMSV) traverse the membrane as a helical segment. Residues 155 to 173 (DRYIAVCHPVKALDFRTPL) are Cytoplasmic-facing. The chain crosses the membrane as a helical span at residues 174 to 196 (KAKIINICIWILSSSVGISAIVL). At 197 to 222 (GGTKVREDMEVIECSLQFPDDDYSWW) the chain is on the extracellular side. Residues 223 to 247 (DLFMKVCVFVFAFVIPVLIIIVCYT) traverse the membrane as a helical segment. The Cytoplasmic segment spans residues 248–274 (LMILRLKSVRLLSGSREKDRNLRRITR). Residues 275 to 296 (LVLVVVAVFVVCWTPIHIFILV) traverse the membrane as a helical segment. At 297-311 (EALGSTAHSTAALSS) the chain is on the extracellular side. The helical transmembrane segment at 312–333 (YYFCIALGYTNSSLNPILYAFL) threads the bilayer. Topologically, residues 334-380 (DENFKRCFRDFCFPIKMRMERQSTSRVRNTVQDPAYVREVDGVNKPV) are cytoplasmic. Cys345 is lipidated: S-palmitoyl cysteine.

The protein belongs to the G-protein coupled receptor 1 family. As to quaternary structure, interacts with NHERF1. Interacts with GABARAPL1.

Its subcellular location is the cell membrane. Functionally, G-protein coupled opioid receptor that functions as a receptor for endogenous alpha-neoendorphins and dynorphins, but has low affinity for beta-endorphins. Also functions as a receptor for various synthetic opioids and for the psychoactive diterpene salvinorin A. Ligand binding causes a conformation change that triggers signaling via guanine nucleotide-binding proteins (G proteins) and modulates the activity of down-stream effectors, such as adenylate cyclase. Signaling leads to the inhibition of adenylate cyclase activity. Inhibits neurotransmitter release by reducing calcium ion currents and increasing potassium ion conductance. Plays a role in the perception of pain. Plays a role in mediating reduced physical activity upon treatment with synthetic opioids. Plays a role in the regulation of salivation in response to synthetic opioids. May play a role in arousal and regulation of autonomic and neuroendocrine functions. The chain is Kappa-type opioid receptor (OPRK1) from Bos taurus (Bovine).